The following is a 1441-amino-acid chain: ABC transporter G family member 51 (1441 aa).

The tract at residues 52–71 (VLPDPDGLGGGDGGGRGEGQ) is disordered. Residues 58 to 69 (GLGGGDGGGRGE) show a composition bias toward gly residues. The region spanning 154 to 428 (LISSHLLRPD…FKSLGFSLPP (275 aa)) is the ABC transporter 1 domain. 187–194 (GPPASGKS) contacts ATP. The region spanning 505–718 (SLVRACFARE…AQRAVSVNEF (214 aa)) is the ABC transmembrane type-2 1 domain. 6 helical membrane passes run 523–543 (FLYT…STLF), 558–578 (LYLA…FTEM), 615–635 (FIEA…APTV), 642–662 (MLLL…MGAI), 668–688 (IAST…GFVV), and 751–771 (FWIG…MFTL). The region spanning 838 to 1090 (MTFHNVNYYV…DMINYFQGIP (253 aa)) is the ABC transporter 2 domain. 883–890 (GASGSGKT) contributes to the ATP binding site. The region spanning 1163 to 1380 (TQFMVCLRKQ…TLRGVITSQL (218 aa)) is the ABC transmembrane type-2 2 domain. Transmembrane regions (helical) follow at residues 1184–1204 (VVRL…FWNV), 1214–1234 (ILLL…NNAS), 1271–1291 (VEIP…YFMV), 1300–1320 (LVLY…YGMV), 1330–1350 (MASV…GFLI), 1355–1375 (IPGW…LRGV), and 1413–1433 (ATVA…AISI).

Belongs to the ABC transporter superfamily. ABCG family. PDR (TC 3.A.1.205) subfamily.

It is found in the membrane. Its function is as follows. May be a general defense protein. This chain is ABC transporter G family member 51, found in Oryza sativa subsp. japonica (Rice).